The primary structure comprises 75 residues: MQKRSSFDSAEIMHRAEDLMQAASNRYRITVQVAQRAKRRRYEEFDAVEDPLMKPPIRAIIEMSDELTQPEIIGE.

The protein belongs to the RNA polymerase subunit omega family. As to quaternary structure, in cyanobacteria the RNAP catalytic core is composed of 2 alpha, 1 beta, 1 beta', 1 gamma and 1 omega subunit. When a sigma factor is associated with the core the holoenzyme is formed, which can initiate transcription.

The catalysed reaction is RNA(n) + a ribonucleoside 5'-triphosphate = RNA(n+1) + diphosphate. Its function is as follows. Promotes RNA polymerase assembly. Latches the N- and C-terminal regions of the beta' subunit thereby facilitating its interaction with the beta and alpha subunits. The protein is DNA-directed RNA polymerase subunit omega of Picosynechococcus sp. (strain ATCC 27264 / PCC 7002 / PR-6) (Agmenellum quadruplicatum).